The following is a 371-amino-acid chain: Chorismate synthase (371 aa).

Residues R48 and R54 each contribute to the NADP(+) site. FMN-binding positions include 130–132 (RSS), 242–243 (NA), G287, 302–306 (KPTSS), and R328.

The protein belongs to the chorismate synthase family. Homotetramer. The cofactor is FMNH2.

The catalysed reaction is 5-O-(1-carboxyvinyl)-3-phosphoshikimate = chorismate + phosphate. Its pathway is metabolic intermediate biosynthesis; chorismate biosynthesis; chorismate from D-erythrose 4-phosphate and phosphoenolpyruvate: step 7/7. Catalyzes the anti-1,4-elimination of the C-3 phosphate and the C-6 proR hydrogen from 5-enolpyruvylshikimate-3-phosphate (EPSP) to yield chorismate, which is the branch point compound that serves as the starting substrate for the three terminal pathways of aromatic amino acid biosynthesis. This reaction introduces a second double bond into the aromatic ring system. In Azorhizobium caulinodans (strain ATCC 43989 / DSM 5975 / JCM 20966 / LMG 6465 / NBRC 14845 / NCIMB 13405 / ORS 571), this protein is Chorismate synthase.